The sequence spans 417 residues: Phosphoglycerate kinase 1 (417 aa).

N-acetylserine is present on serine 2. A phosphoserine mark is found at serine 2 and serine 4. Lysine 6 carries the post-translational modification N6-succinyllysine. Residue lysine 11 is modified to N6-acetyllysine. 6 residues coordinate (2R)-3-phosphoglycerate: valine 23, aspartate 24, phenylalanine 25, asparagine 26, glutamine 38, and arginine 39. The mitochondrial targeting region exposed following cis-trans isomerization by PIN1 and recognized by the TOM complex for mitochondrial translocation of the protein stretch occupies residues 38–43; sequence QRIKAA. Lysine 48 is subject to N6-acetyllysine; alternate. Lysine 48 carries the N6-succinyllysine; alternate modification. (2R)-3-phosphoglycerate contacts are provided by serine 62, histidine 63, glycine 65, and arginine 66. Residue lysine 75 is modified to N6-acetyllysine. Residue tyrosine 76 is modified to Phosphotyrosine. Residues lysine 86 and lysine 91 each carry the N6-acetyllysine modification. Lysine 97 carries the N6-acetyllysine; alternate modification. Lysine 97 carries the N6-(2-hydroxyisobutyryl)lysine; alternate modification. 2 residues coordinate (2R)-3-phosphoglycerate: leucine 122 and arginine 123. Lysine 131 bears the N6-acetyllysine; alternate mark. Lysine 131 carries the post-translational modification N6-malonyllysine; alternate. An N6-acetyllysine modification is found at lysine 146. Histidine 170 and arginine 171 together coordinate (2R)-3-phosphoglycerate. Lysine 191 carries the post-translational modification N6-succinyllysine. Tyrosine 196 carries the phosphotyrosine modification. Residue lysine 199 is modified to N6-acetyllysine. Serine 203 is subject to Phosphoserine. Glycine 214 contacts ADP. Residue glycine 214 coordinates CDP. Positions 215 and 216 each coordinate AMP. Alanine 215 is an ATP binding site. Alanine 215 provides a ligand contact to Mg(2+). Residue lysine 216 is modified to N6-(2-hydroxyisobutyryl)lysine. Mg(2+) is bound by residues alanine 218 and aspartate 219. Aspartate 219 lines the CDP pocket. Lysine 220 serves as a coordination point for AMP. Position 220 (lysine 220) interacts with ATP. Lysine 220 is modified (N6-(2-hydroxyisobutyryl)lysine). An ADP-binding site is contributed by glycine 238. Glycine 238 is a CDP binding site. Residue glycine 239 participates in AMP binding. Residue glycine 239 participates in ATP binding. N6-acetyllysine is present on residues lysine 267 and lysine 291. Glycine 313 serves as a coordination point for AMP. Glycine 313 is an ATP binding site. N6-(2-hydroxyisobutyryl)lysine is present on lysine 323. Residues glycine 338, valine 340, and phenylalanine 343 each contribute to the CDP site. Phenylalanine 343 is an ADP binding site. Glutamate 344 provides a ligand contact to AMP. An ATP-binding site is contributed by glutamate 344. N6-acetyllysine is present on lysine 361. Residues aspartate 375 and threonine 376 each coordinate ATP. Aspartate 375 contacts Mg(2+).

Belongs to the phosphoglycerate kinase family. In terms of assembly, monomer. Interacts with kinase MAPK1/ERK2; the interaction is direct, occurs under hypoxic conditions, and promotes its interaction with PIN1. Interacts with peptidyl-prolyl cis-trans isomerase PIN1; the interaction is direct, occurs under hypoxic conditions, and targets the protein to the mitochondrion by promoting interactions with the TOM complex. Interacts with mitochondrial circRNA mcPGK1 (via its 2nd stem-loop); the interaction is direct and targets the protein to the mitochondrion by promoting interactions with the TOM complex. Interacts with pyruvate dehydrogenase kinase PDK1; the interaction is direct, occurs under hypoxic conditions and leads to PDK1-mediated inhibition of pyruvate dehydrogenase complex activity. Mg(2+) serves as cofactor. Post-translationally, phosphorylated at Ser-203 by MAPK1/ERK2 under hypoxic conditions, which promotes its mitochondrial targeting. Testis, lung, brain, skeletal muscle, liver, intestine, and kidney (at protein level).

The protein localises to the cytoplasm. The protein resides in the cytosol. Its subcellular location is the mitochondrion matrix. The catalysed reaction is (2R)-3-phosphoglycerate + ATP = (2R)-3-phospho-glyceroyl phosphate + ADP. It carries out the reaction L-seryl-[protein] + ATP = O-phospho-L-seryl-[protein] + ADP + H(+). Its pathway is carbohydrate degradation; glycolysis; pyruvate from D-glyceraldehyde 3-phosphate: step 2/5. Catalyzes one of the two ATP producing reactions in the glycolytic pathway via the reversible conversion of 1,3-diphosphoglycerate to 3-phosphoglycerate. Both L- and D- forms of purine and pyrimidine nucleotides can be used as substrates, but the activity is much lower on pyrimidines. In addition to its role as a glycolytic enzyme, it seems that PGK-1 acts as a polymerase alpha cofactor protein (primer recognition protein). Acts as a protein kinase when localized to the mitochondrion where it phosphorylates pyruvate dehydrogenase kinase PDK1 to inhibit pyruvate dehydrogenase complex activity and suppress the formation of acetyl-coenzyme A from pyruvate, and consequently inhibit oxidative phosphorylation and promote glycolysis. May play a role in sperm motility. This is Phosphoglycerate kinase 1 (Pgk1) from Mus musculus (Mouse).